The following is a 496-amino-acid chain: L-arabinose isomerase (496 aa).

Glutamate 302, glutamate 329, histidine 346, and histidine 445 together coordinate Mn(2+).

It belongs to the arabinose isomerase family. Mn(2+) is required as a cofactor.

The catalysed reaction is beta-L-arabinopyranose = L-ribulose. Its pathway is carbohydrate degradation; L-arabinose degradation via L-ribulose; D-xylulose 5-phosphate from L-arabinose (bacterial route): step 1/3. Its function is as follows. Catalyzes the conversion of L-arabinose to L-ribulose. In Thermotoga maritima (strain ATCC 43589 / DSM 3109 / JCM 10099 / NBRC 100826 / MSB8), this protein is L-arabinose isomerase.